Consider the following 329-residue polypeptide: Glycerol-3-phosphate dehydrogenase [NAD(P)+] (329 aa).

NADPH-binding residues include W15, H35, and K107. The sn-glycerol 3-phosphate site is built by K107, G135, and S137. A139 serves as a coordination point for NADPH. Sn-glycerol 3-phosphate is bound by residues K190, D243, S253, R254, and N255. Catalysis depends on K190, which acts as the Proton acceptor. R254 is a binding site for NADPH. NADPH is bound by residues L276 and E278.

This sequence belongs to the NAD-dependent glycerol-3-phosphate dehydrogenase family.

The protein resides in the cytoplasm. It carries out the reaction sn-glycerol 3-phosphate + NAD(+) = dihydroxyacetone phosphate + NADH + H(+). The catalysed reaction is sn-glycerol 3-phosphate + NADP(+) = dihydroxyacetone phosphate + NADPH + H(+). Its pathway is membrane lipid metabolism; glycerophospholipid metabolism. Catalyzes the reduction of the glycolytic intermediate dihydroxyacetone phosphate (DHAP) to sn-glycerol 3-phosphate (G3P), the key precursor for phospholipid synthesis. The polypeptide is Glycerol-3-phosphate dehydrogenase [NAD(P)+] (Rhodopseudomonas palustris (strain BisB5)).